The following is a 367-amino-acid chain: Developmentally-regulated GTP-binding protein 1 (367 aa).

The interval 2–16 is required for interaction with STK16; that stretch reads SGTLARIAEIEAEMA. One can recognise an OBG-type G domain in the interval 65 to 290; that stretch reads ARIGFVGFPS…LLEKIWDYLQ (226 aa). Residues 71–78, 96–100, 117–120, 248–251, and 271–273 contribute to the GTP site; these read GFPSVGKS, FTTLT, DLPG, NKID, and SAH. Mg(2+) is bound by residues serine 78 and threonine 98. The 77-residue stretch at 290 to 366 folds into the TGS domain; the sequence is QLVRIYTKPK…EDEDVIQIVK (77 aa).

Belongs to the TRAFAC class OBG-HflX-like GTPase superfamily. OBG GTPase family. Mg(2+) serves as cofactor. It depends on K(+) as a cofactor. In terms of tissue distribution, expressed in many adult amd embryonic tissues. In adults, highest levels in ovaries and testes, followed by skeletal muscle, stomach, brain, kidney and liver. Weak expression in heart and brain.

Its subcellular location is the nucleus. The protein resides in the cytoplasm. It carries out the reaction GTP + H2O = GDP + phosphate + H(+). Its function is as follows. Catalyzes the conversion of GTP to GDP through hydrolysis of the gamma-phosphate bond in GTP. Binds to microtubules and promotes microtubule polymerization and bundling. GTPase activity is not necessary for these microtubule-related functions. In Xenopus laevis (African clawed frog), this protein is Developmentally-regulated GTP-binding protein 1 (drg1).